Here is a 179-residue protein sequence, read N- to C-terminus: 3-hydroxyanthranilate 3,4-dioxygenase (179 aa).

An O2-binding site is contributed by Arg47. The Fe cation site is built by His51, Glu57, and His96. Residue Glu57 participates in substrate binding. 2 residues coordinate substrate: Arg100 and Glu110. Fe cation is bound by residues Cys125, Cys128, Cys162, and Cys165.

The protein belongs to the 3-HAO family. Fe(2+) is required as a cofactor.

The enzyme catalyses 3-hydroxyanthranilate + O2 = (2Z,4Z)-2-amino-3-carboxymuconate 6-semialdehyde. It functions in the pathway cofactor biosynthesis; NAD(+) biosynthesis; quinolinate from L-kynurenine: step 3/3. Functionally, catalyzes the oxidative ring opening of 3-hydroxyanthranilate to 2-amino-3-carboxymuconate semialdehyde, which spontaneously cyclizes to quinolinate. The sequence is that of 3-hydroxyanthranilate 3,4-dioxygenase from Bacillus thuringiensis (strain Al Hakam).